The following is a 324-amino-acid chain: Glyoxylate/hydroxypyruvate reductase B (324 aa).

Residues Arg-237 and Glu-266 contribute to the active site. The active-site Proton donor is His-285.

This sequence belongs to the D-isomer specific 2-hydroxyacid dehydrogenase family. GhrB subfamily. In terms of assembly, homodimer.

It is found in the cytoplasm. It carries out the reaction glycolate + NADP(+) = glyoxylate + NADPH + H(+). It catalyses the reaction (R)-glycerate + NAD(+) = 3-hydroxypyruvate + NADH + H(+). The catalysed reaction is (R)-glycerate + NADP(+) = 3-hydroxypyruvate + NADPH + H(+). Its function is as follows. Catalyzes the NADPH-dependent reduction of glyoxylate and hydroxypyruvate into glycolate and glycerate, respectively. The chain is Glyoxylate/hydroxypyruvate reductase B from Enterobacter sp. (strain 638).